The chain runs to 609 residues: Mitochondrial nucleoid-associated protein 1 (609 aa).

Topologically, residues 1 to 552 (MSDNPPRMEV…IRCNTTIRKS (552 aa)) are mitochondrial matrix. Disordered stretches follow at residues 142 to 168 (ASEK…NPSE), 183 to 202 (SNQD…TTSG), and 410 to 441 (QLSL…HTPQ). Positions 146–161 (TSPKRELAKDLPKSGE) are enriched in basic and acidic residues. Residues 418–441 (DSQFQASHTGCQSPLCSAQRHTPQ) are compositionally biased toward polar residues. A helical transmembrane segment spans residues 553–573 (GFGGITMLFTGYFVLCCSWSF). The Mitochondrial intermembrane portion of the chain corresponds to 574–609 (RRLKKLCRPLPWKSTVPPCIGVAKTTGDCRSKTCLD).

The protein resides in the mitochondrion inner membrane. It localises to the mitochondrion matrix. The protein localises to the mitochondrion nucleoid. In terms of biological role, critical regulator of mitochondrial DNA (mtDNA) abundance. Binds dsDNA throughout the mitochondrial genome without sequence specificity and controls mtDNA copy number by promoting its replication. Also plays important roles in mitochondrial metabolism and cell proliferation. The protein is Mitochondrial nucleoid-associated protein 1 of Homo sapiens (Human).